The sequence spans 427 residues: Serine--tRNA ligase (427 aa).

Residue 235–237 (TAE) participates in L-serine binding. ATP is bound by residues 266-268 (RRE) and V282. An L-serine-binding site is contributed by E289. 353 to 356 (EASS) lines the ATP pocket. L-serine is bound at residue S389.

The protein belongs to the class-II aminoacyl-tRNA synthetase family. Type-1 seryl-tRNA synthetase subfamily. As to quaternary structure, homodimer. The tRNA molecule binds across the dimer.

The protein resides in the cytoplasm. It catalyses the reaction tRNA(Ser) + L-serine + ATP = L-seryl-tRNA(Ser) + AMP + diphosphate + H(+). The enzyme catalyses tRNA(Sec) + L-serine + ATP = L-seryl-tRNA(Sec) + AMP + diphosphate + H(+). The protein operates within aminoacyl-tRNA biosynthesis; selenocysteinyl-tRNA(Sec) biosynthesis; L-seryl-tRNA(Sec) from L-serine and tRNA(Sec): step 1/1. Catalyzes the attachment of serine to tRNA(Ser). Is also able to aminoacylate tRNA(Sec) with serine, to form the misacylated tRNA L-seryl-tRNA(Sec), which will be further converted into selenocysteinyl-tRNA(Sec). In Chloroherpeton thalassium (strain ATCC 35110 / GB-78), this protein is Serine--tRNA ligase.